The chain runs to 297 residues: uncharacterized protein (297 aa).

Glutamate 46 is a catalytic residue.

This sequence belongs to the PhzF family. As to quaternary structure, homodimer and homotetramer.

This is an uncharacterized protein from Escherichia coli (strain K12).